A 174-amino-acid polypeptide reads, in one-letter code: Methylated-DNA--protein-cysteine methyltransferase (174 aa).

The active-site Nucleophile; methyl group acceptor is Cys141.

Belongs to the MGMT family.

The protein resides in the cytoplasm. The enzyme catalyses a 6-O-methyl-2'-deoxyguanosine in DNA + L-cysteinyl-[protein] = S-methyl-L-cysteinyl-[protein] + a 2'-deoxyguanosine in DNA. The catalysed reaction is a 4-O-methyl-thymidine in DNA + L-cysteinyl-[protein] = a thymidine in DNA + S-methyl-L-cysteinyl-[protein]. Its function is as follows. Involved in the cellular defense against the biological effects of O6-methylguanine (O6-MeG) and O4-methylthymine (O4-MeT) in DNA. Repairs the methylated nucleobase in DNA by stoichiometrically transferring the methyl group to a cysteine residue in the enzyme. This is a suicide reaction: the enzyme is irreversibly inactivated. In Thermococcus gammatolerans (strain DSM 15229 / JCM 11827 / EJ3), this protein is Methylated-DNA--protein-cysteine methyltransferase.